The sequence spans 174 residues: Crossover junction endodeoxyribonuclease RuvC (174 aa).

Active-site residues include Asp8, Glu69, and Asp141. Positions 8, 69, and 141 each coordinate Mg(2+).

Belongs to the RuvC family. In terms of assembly, homodimer which binds Holliday junction (HJ) DNA. The HJ becomes 2-fold symmetrical on binding to RuvC with unstacked arms; it has a different conformation from HJ DNA in complex with RuvA. In the full resolvosome a probable DNA-RuvA(4)-RuvB(12)-RuvC(2) complex forms which resolves the HJ. It depends on Mg(2+) as a cofactor.

Its subcellular location is the cytoplasm. It carries out the reaction Endonucleolytic cleavage at a junction such as a reciprocal single-stranded crossover between two homologous DNA duplexes (Holliday junction).. Its function is as follows. The RuvA-RuvB-RuvC complex processes Holliday junction (HJ) DNA during genetic recombination and DNA repair. Endonuclease that resolves HJ intermediates. Cleaves cruciform DNA by making single-stranded nicks across the HJ at symmetrical positions within the homologous arms, yielding a 5'-phosphate and a 3'-hydroxyl group; requires a central core of homology in the junction. The consensus cleavage sequence is 5'-(A/T)TT(C/G)-3'. Cleavage occurs on the 3'-side of the TT dinucleotide at the point of strand exchange. HJ branch migration catalyzed by RuvA-RuvB allows RuvC to scan DNA until it finds its consensus sequence, where it cleaves and resolves the cruciform DNA. In Xanthomonas euvesicatoria pv. vesicatoria (strain 85-10) (Xanthomonas campestris pv. vesicatoria), this protein is Crossover junction endodeoxyribonuclease RuvC.